A 159-amino-acid chain; its full sequence is 2-C-methyl-D-erythritol 2,4-cyclodiphosphate synthase (159 aa).

Positions 8 and 10 each coordinate a divalent metal cation. 4-CDP-2-C-methyl-D-erythritol 2-phosphate is bound by residues 8 to 10 and 34 to 35; these read DVH and HS. An a divalent metal cation-binding site is contributed by His-42. 4-CDP-2-C-methyl-D-erythritol 2-phosphate contacts are provided by residues 56–58, 61–65, 100–106, 132–135, Phe-139, and Arg-142; these read DIG, FPDTD, AQAPKML, and TTTE.

The protein belongs to the IspF family. As to quaternary structure, homotrimer. A divalent metal cation serves as cofactor.

The enzyme catalyses 4-CDP-2-C-methyl-D-erythritol 2-phosphate = 2-C-methyl-D-erythritol 2,4-cyclic diphosphate + CMP. It functions in the pathway isoprenoid biosynthesis; isopentenyl diphosphate biosynthesis via DXP pathway; isopentenyl diphosphate from 1-deoxy-D-xylulose 5-phosphate: step 4/6. Functionally, involved in the biosynthesis of isopentenyl diphosphate (IPP) and dimethylallyl diphosphate (DMAPP), two major building blocks of isoprenoid compounds. Catalyzes the conversion of 4-diphosphocytidyl-2-C-methyl-D-erythritol 2-phosphate (CDP-ME2P) to 2-C-methyl-D-erythritol 2,4-cyclodiphosphate (ME-CPP) with a corresponding release of cytidine 5-monophosphate (CMP). The sequence is that of 2-C-methyl-D-erythritol 2,4-cyclodiphosphate synthase from Klebsiella pneumoniae subsp. pneumoniae (strain ATCC 700721 / MGH 78578).